The sequence spans 248 residues: Anamorsin homolog (248 aa).

Residues 4-129 (FKGLQKSLYI…ETGSSARLSF (126 aa)) form an N-terminal SAM-like domain region. Residues 130–161 (AKKNASAINVWKISGDDEELIDEEELLDEEDK) are linker. [2Fe-2S] cluster is bound by residues Cys172, Cys181, Cys184, and Cys186. A fe-S binding site A region spans residues 172-186 (CSTTGKRKACKNCSC). Residues Cys209, Cys212, Cys220, and Cys223 each contribute to the [4Fe-4S] cluster site. 2 short sequence motifs (cx2C motif) span residues 209-212 (CGNC) and 220-223 (CSTC). The segment at 209–223 (CGNCYLGDAFRCSTC) is fe-S binding site B.

It belongs to the anamorsin family. As to quaternary structure, monomer. The cofactor is [2Fe-2S] cluster. It depends on [4Fe-4S] cluster as a cofactor.

It localises to the cytoplasm. It is found in the mitochondrion intermembrane space. Its function is as follows. Component of the cytosolic iron-sulfur (Fe-S) protein assembly (CIA) machinery. Required for the maturation of extramitochondrial Fe-S proteins. Part of an electron transfer chain functioning in an early step of cytosolic Fe-S biogenesis, facilitating the de novo assembly of a [4Fe-4S] cluster on the cytosolic Fe-S scaffold complex. Electrons are transferred from NADPH via a FAD- and FMN-containing diflavin oxidoreductase. Together with the diflavin oxidoreductase, also required for the assembly of the diferric tyrosyl radical cofactor of ribonucleotide reductase (RNR), probably by providing electrons for reduction during radical cofactor maturation in the catalytic small subunit. This is Anamorsin homolog from Drosophila erecta (Fruit fly).